The chain runs to 101 residues: Ascorbate-specific PTS system EIIB component (101 aa).

Positions 3 to 96 constitute a PTS EIIB type-2 domain; the sequence is VRILAVCGNG…KLLKVIKEHF (94 aa). Cys-9 serves as the catalytic Phosphocysteine intermediate. A Phosphocysteine modification is found at Cys-9.

Its subcellular location is the cytoplasm. It catalyses the reaction N(pros)-phospho-L-histidyl-[protein] + L-ascorbate(out) = L-ascorbate 6-phosphate(in) + L-histidyl-[protein]. Functionally, the phosphoenolpyruvate-dependent sugar phosphotransferase system (sugar PTS), a major carbohydrate active transport system, catalyzes the phosphorylation of incoming sugar substrates concomitantly with their translocation across the cell membrane. The enzyme II UlaABC PTS system is involved in ascorbate transport. The sequence is that of Ascorbate-specific PTS system EIIB component (ulaB) from Shigella dysenteriae serotype 1 (strain Sd197).